Here is a 452-residue protein sequence, read N- to C-terminus: C4-dicarboxylate transport protein 1 (452 aa).

9 helical membrane passes run F18–G38, L51–M71, L83–V103, A151–L171, V191–M211, L229–A249, G304–A324, I337–G357, and I359–I379. The disordered stretch occupies residues W426–G452. Positions E431–H442 are enriched in basic and acidic residues.

It belongs to the dicarboxylate/amino acid:cation symporter (DAACS) (TC 2.A.23) family.

The protein localises to the cell inner membrane. Responsible for the transport of dicarboxylates such as succinate, fumarate, and malate from the periplasm across the membrane. In Polaromonas naphthalenivorans (strain CJ2), this protein is C4-dicarboxylate transport protein 1.